The following is a 100-amino-acid chain: Urease subunit gamma (100 aa).

This sequence belongs to the urease gamma subunit family. In terms of assembly, heterotrimer of UreA (gamma), UreB (beta) and UreC (alpha) subunits. Three heterotrimers associate to form the active enzyme.

It is found in the cytoplasm. The enzyme catalyses urea + 2 H2O + H(+) = hydrogencarbonate + 2 NH4(+). Its pathway is nitrogen metabolism; urea degradation; CO(2) and NH(3) from urea (urease route): step 1/1. This Proteus hauseri protein is Urease subunit gamma.